Here is a 2364-residue protein sequence, read N- to C-terminus: Cytotoxin-L (2364 aa).

The tract at residues 1 to 91 is four-helical bundle; that stretch reads MNLVNKAQLQ…EVLELKNNSL (91 aa). One can recognise a GT44 domain in the interval 96–468; that stretch reads KNLHFIWIGG…APDVRSTINL (373 aa). The interval 96–468 is glucosyltransferase region; it reads KNLHFIWIGG…APDVRSTINL (373 aa). Residues 101 to 103, asparagine 139, 265 to 270, and 286 to 288 each bind UDP-alpha-D-glucose; these read IWI, LAAASD, and DVD. Residues aspartate 288, glutamate 515, and serine 518 each contribute to the Mg(2+) site. 518–520 contacts UDP-alpha-D-glucose; the sequence is SLW. The autoprocessing region stretch occupies residues 544 to 799; that stretch reads GEDDNLDFAQ…KSKYLHELST (256 aa). The Zn(2+) site is built by glutamate 545 and aspartate 546. A Peptidase C80 domain is found at 567-774; sequence LSSMKTRNKE…EESIIKDISS (208 aa). 1D-myo-inositol hexakisphosphate is bound by residues tyrosine 577, lysine 600, and lysine 647. Residue histidine 653 coordinates Zn(2+). Histidine 653 (for protease activity) is an active-site residue. The active-site Nucleophile; for protease activity is cysteine 698. Residue histidine 757 participates in Zn(2+) binding. 1D-myo-inositol hexakisphosphate-binding residues include lysine 764, lysine 775, and lysine 792. Positions 800-1500 are translocation region; that stretch reads LLQEIRNNAN…ESIIRNIYMP (701 aa). 5 interaction with host SEMA6A and SEMA6B regions span residues 1433–1438, 1466–1471, 1484–1495, 1504–1511, and 1596–1601; these read CMKLIE, DNETKY, FTAEFSNESIIR, NLFIYSSK, and YNNLDP. 20 Cell wall-binding repeats span residues 1813 to 1832, 1833 to 1852, 1854 to 1873, 1876 to 1895, 1926 to 1945, 1946 to 1965, 1967 to 1986, 1987 to 2006, 2007 to 2026, 2057 to 2076, 2077 to 2097, 2099 to 2118, 2119 to 2138, 2139 to 2158, 2209 to 2224, 2227 to 2249, 2250 to 2269, 2270 to 2289, 2320 to 2339, and 2340 to 2359; these read EFGLVSLDNDYFYINSFGNM, VSGLIYINDSLYYFKPPKNN, ITGFTTIDGNKYYFDPTKSG, SIGEITIDGKDYYFNKQGIL, FIGKLNIDGKIYYFEDNYRA, AVEWKLLDDETYYFNPKTGE, LKGLHQIGDNKYYFDDNGIM, QTGFITINDKVFYFNNDGVM, QVGYIEVNGKYFYFGKNGER, YNGILNFNGKIYFFDISNTA, VVGWGTLDDGSTYYFDDNRAE, CIGLTVINDCKYYFDDNGIR, QLGFITINDNIFYFSESGKI, ELGYQNINGNYFYIDESGLV, ETGWIENETDKYYFDP, KKAYKGINVVDDIKYYFDENGIM, RTGLISFENNNYYFNEDGKM, QFGYLNIKDKMFYFGKDGKM, YTGWLDLDGKRYYFTDEYIA, and ATGSLTIDGYNYYFDPDTAE. Residues 1835-2364 form a receptor-binding (CROPS) region region; sequence GLIYINDSLY…PDTAELVVSE (530 aa).

The protein belongs to the clostridial glucosylating toxin (LCGT) family. In terms of assembly, homomultimer; forms an inactive homomultimer at pH 8, which dissociates at pH 4, leading to cytotoxicity. Interacts with host SEMA6A; interaction promotes toxin entry into host cell. Interacts with host SEMA6B; interaction promotes toxin entry into host cell. Zn(2+) is required as a cofactor. It depends on Mn(2+) as a cofactor. The cofactor is Mg(2+). Undergoes autocatalytic cleavage to release the N-terminal part (Glucosyltransferase TcsL), which constitutes the active part of the toxin, in the host cytosol. 1D-myo-inositol hexakisphosphate-binding (InsP6) activates the peptidase C80 domain and promotes autoprocessing.

Its subcellular location is the secreted. It localises to the host endosome membrane. The protein localises to the host cytoplasm. It is found in the host cytosol. The protein resides in the host cell membrane. The enzyme catalyses L-threonyl-[protein] + UDP-alpha-D-glucose = 3-O-(alpha-D-glucosyl)-L-threonyl-[protein] + UDP + H(+). Protease activity is activated upon binding to 1D-myo-inositol hexakisphosphate (InsP6), which induces conformational reorganization. Its function is as follows. Precursor of a cytotoxin that targets the vascular endothelium, inducing an anti-inflammatory effect and resulting in lethal toxic shock syndrome. TcsL constitutes the main toxin that mediates the pathology of P.sordellii infection, an anaerobic Gram-positive bacterium found in soil and in the gastrointestinal and vaginal tracts of animals and humans; although the majority of carriers are asymptomatic, pathogenic P.sordellii infections arise rapidly and are highly lethal. This form constitutes the precursor of the toxin: it enters into host cells and mediates autoprocessing to release the active toxin (Glucosyltransferase TcsL) into the host cytosol. Targets vascular endothelium by binding to the semaphorin proteins SEMA6A and SEMA6B, and enters host cells via clathrin-mediated endocytosis. Once entered into host cells, acidification in the endosome promotes the membrane insertion of the translocation region and formation of a pore, leading to translocation of the GT44 and peptidase C80 domains across the endosomal membrane. This activates the peptidase C80 domain and autocatalytic processing, releasing the N-terminal part (Glucosyltransferase TcsL), which constitutes the active part of the toxin, in the cytosol. In terms of biological role, active form of the toxin, which is released into the host cytosol following autoprocessing and inactivates small GTPases. Acts by mediating monoglucosylation of small GTPases of the Ras (H-Ras/HRAS, K-Ras/KRAS, N-Ras/NRAS and Ral/RALA) family in host cells at the conserved threonine residue located in the switch I region ('Thr-37/35'), using UDP-alpha-D-glucose as the sugar donor. Also able to catalyze monoglucosylation of some members of the Rho family (Rac1 and Rap2A), but with less efficiency than with Ras proteins. Monoglucosylation of host small GTPases completely prevents the recognition of the downstream effector, blocking the GTPases in their inactive form and leading to apoptosis. Induces an anti-inflammatory effect, mainly by inactivating Ras proteins which results in blockage of the cell cycle and killing of immune cells. The absence or moderate local inflammatory response allows C.sordellii spreading in deep tissues, production of toxin which is released in the general circulation and causes a toxic shock syndrome. This is Cytotoxin-L from Paraclostridium sordellii (Clostridium sordellii).